Here is a 298-residue protein sequence, read N- to C-terminus: Sulfofructose kinase (298 aa).

D13, K27, G39, S95, and R138 together coordinate 6-deoxy-6-sulfo-D-fructose. Positions 212, 214, 217, and 243 each coordinate ATP. Residue D244 participates in 6-deoxy-6-sulfo-D-fructose binding.

This sequence belongs to the carbohydrate kinase PfkB family. Homodimer.

The catalysed reaction is 6-deoxy-6-sulfo-D-fructose + ATP = 6-deoxy-6-sulfo-D-fructose 1-phosphate + ADP + H(+). With respect to regulation, strongly inhibited by ADP. Activated by sulfoquinovose (SQ), sulfolactaldehyde (SLA) and dihydroxyacetone phosphate (DHAP) (through effects on KM) and by fructose 6-phosphate (F6P), fructose bisphosphate (FBP), phosphoenolpyruvate (PEP) and citrate (through effects on kcat/KM). Its function is as follows. Phosphorylates 6-deoxy-6-sulfo-D-fructose (SF) to 6-deoxy-6-sulfo-D-fructose 1-phosphate (SFP). Cannot phosphorylate fructose 6-phosphate. This Escherichia coli (strain K12) protein is Sulfofructose kinase (yihV).